A 127-amino-acid chain; its full sequence is Large ribosomal subunit protein eL8 (127 aa).

Belongs to the eukaryotic ribosomal protein eL8 family. Part of the 50S ribosomal subunit. Component of box C/D small ribonucleoprotein (sRNP) particles that contain rpl7ae, FlpA and nop5, plus a guide RNA. These sRNP particles form homodimers, giving rise to an asymmetric holoenzyme. Probably part of the RNase P complex.

It is found in the cytoplasm. Functionally, multifunctional RNA-binding protein that recognizes the K-turn motif in ribosomal RNA, the RNA component of RNase P, box H/ACA, box C/D and box C'/D' sRNAs. The chain is Large ribosomal subunit protein eL8 from Saccharolobus solfataricus (strain ATCC 35092 / DSM 1617 / JCM 11322 / P2) (Sulfolobus solfataricus).